Reading from the N-terminus, the 422-residue chain is Glutamyl-tRNA reductase (422 aa).

Substrate contacts are provided by residues 49-52 (TCNR), Ser108, 113-115 (EPQ), and Gln119. The Nucleophile role is filled by Cys50. Residue 188–193 (GAGQTI) coordinates NADP(+).

Belongs to the glutamyl-tRNA reductase family. As to quaternary structure, homodimer.

The enzyme catalyses (S)-4-amino-5-oxopentanoate + tRNA(Glu) + NADP(+) = L-glutamyl-tRNA(Glu) + NADPH + H(+). Its pathway is porphyrin-containing compound metabolism; protoporphyrin-IX biosynthesis; 5-aminolevulinate from L-glutamyl-tRNA(Glu): step 1/2. Functionally, catalyzes the NADPH-dependent reduction of glutamyl-tRNA(Glu) to glutamate 1-semialdehyde (GSA). The sequence is that of Glutamyl-tRNA reductase from Marinomonas sp. (strain MWYL1).